We begin with the raw amino-acid sequence, 313 residues long: UPF0761 membrane protein VV0203 (313 aa).

The next 6 helical transmembrane spans lie at 41–61, 104–124, 139–159, 185–205, 215–235, and 249–269; these read YLAY…LSIL, MTAV…SNID, AVFS…LVGA, LLRW…YLLV, AVVG…GFAA, and ALAA…IVLI. Residues 293-313 form a disordered region; the sequence is LPNNDTELEKDTQRDRFDSES. Over residues 299–313 the composition is skewed to basic and acidic residues; sequence ELEKDTQRDRFDSES.

This sequence belongs to the UPF0761 family.

It localises to the cell inner membrane. The protein is UPF0761 membrane protein VV0203 of Vibrio vulnificus (strain YJ016).